The chain runs to 411 residues: Tyrosine--tRNA ligase (411 aa).

Tyr-34 contributes to the L-tyrosine binding site. The 'HIGH' region signature appears at 39–48 (CTATSLHIGS). Positions 171 and 175 each coordinate L-tyrosine. Positions 231–235 (KMGKT) match the 'KMSKS' region motif. Lys-234 is a binding site for ATP. Residues 345–411 (ISAYELFHEA…GKKKHILVRV (67 aa)) enclose the S4 RNA-binding domain.

It belongs to the class-I aminoacyl-tRNA synthetase family. TyrS type 1 subfamily. As to quaternary structure, homodimer.

The protein resides in the cytoplasm. It catalyses the reaction tRNA(Tyr) + L-tyrosine + ATP = L-tyrosyl-tRNA(Tyr) + AMP + diphosphate + H(+). Catalyzes the attachment of tyrosine to tRNA(Tyr) in a two-step reaction: tyrosine is first activated by ATP to form Tyr-AMP and then transferred to the acceptor end of tRNA(Tyr). This chain is Tyrosine--tRNA ligase, found in Rickettsia conorii (strain ATCC VR-613 / Malish 7).